Reading from the N-terminus, the 205-residue chain is MLQQDSNDDTEDVSLFDAEEETTNRPRKAKIRHPVASFFHLFFRVSAIIVYLLCGLLSSSFITCMVTIILLLSCDFWAVKNVTGRLMVGLRWWNHIDEDGKSHWVFESRKESSQENKTVSEAESRIFWLGLIACPVLWVIFAFSALFSFRVKWLAVVIMGVVLQGANLYGYIRCKVRSRKHLTSMATSYFGKQFLRQNTGDDQTS.

The residue at position 1 (M1) is an N-acetylmethionine. The tract at residues 1–21 (MLQQDSNDDTEDVSLFDAEEE) is disordered. 4 helical membrane-spanning segments follow: residues 34-53 (PVASFFHLFFRVSAIIVYLL), 54-72 (CGLLSSSFITCMVTIILLL), 126-146 (IFWLGLIACPVLWVIFAFSAL), and 152-172 (KWLAVVIMGVVLQGANLYGYI).

This sequence belongs to the TVP23 family.

Its subcellular location is the membrane. This Homo sapiens (Human) protein is Golgi apparatus membrane protein TVP23 homolog B (TVP23B).